A 590-amino-acid chain; its full sequence is Aspartate--tRNA ligase (590 aa).

Glutamate 175 contacts L-aspartate. Residues 199 to 202 (QIFK) form an aspartate region. Arginine 221 serves as a coordination point for L-aspartate. ATP-binding positions include 221 to 223 (RDE) and glutamine 230. Residue histidine 449 coordinates L-aspartate. ATP is bound at residue glutamate 483. An L-aspartate-binding site is contributed by arginine 490. Residue 535–538 (GLDR) coordinates ATP.

This sequence belongs to the class-II aminoacyl-tRNA synthetase family. Type 1 subfamily. In terms of assembly, homodimer.

Its subcellular location is the cytoplasm. The catalysed reaction is tRNA(Asp) + L-aspartate + ATP = L-aspartyl-tRNA(Asp) + AMP + diphosphate. Functionally, catalyzes the attachment of L-aspartate to tRNA(Asp) in a two-step reaction: L-aspartate is first activated by ATP to form Asp-AMP and then transferred to the acceptor end of tRNA(Asp). In Geobacillus kaustophilus (strain HTA426), this protein is Aspartate--tRNA ligase.